Consider the following 317-residue polypeptide: Beta-ketoacyl-[acyl-carrier-protein] synthase III (317 aa).

Active-site residues include Cys-112 and His-244. The segment at 245–249 (QANVR) is ACP-binding. The active site involves Asn-274.

It belongs to the thiolase-like superfamily. FabH family. Homodimer.

Its subcellular location is the cytoplasm. The enzyme catalyses malonyl-[ACP] + acetyl-CoA + H(+) = 3-oxobutanoyl-[ACP] + CO2 + CoA. The protein operates within lipid metabolism; fatty acid biosynthesis. Functionally, catalyzes the condensation reaction of fatty acid synthesis by the addition to an acyl acceptor of two carbons from malonyl-ACP. Catalyzes the first condensation reaction which initiates fatty acid synthesis and may therefore play a role in governing the total rate of fatty acid production. Possesses both acetoacetyl-ACP synthase and acetyl transacylase activities. Its substrate specificity determines the biosynthesis of branched-chain and/or straight-chain of fatty acids. The sequence is that of Beta-ketoacyl-[acyl-carrier-protein] synthase III from Rickettsia canadensis (strain McKiel).